The sequence spans 292 residues: Homeobox-leucine zipper protein HOX19 (292 aa).

Disordered regions lie at residues 14 to 85 (LALG…HSVS), 99 to 133 (RERA…RLTK), and 217 to 236 (FAPP…PPAP). Over residues 28–74 (TDAAAAHRGGCRRPSPSSQCPPLEPSLTLSLPDDAAAGAAATATATA) the composition is skewed to low complexity. Over residues 99–109 (RERAEEADGER) the composition is skewed to basic and acidic residues. Positions 124–183 (STRKKLRLTKEQSALLEDRFREHSTLNPKQKVALAKQLNLRPRQVEVWFQNRRARTKLKQ) form a DNA-binding region, homeobox. The leucine-zipper stretch occupies residues 182–226 (KQTEVDCEFLKRCCETLTEENRRLQRELQELRALKFAPPPPSSAA).

It belongs to the HD-ZIP homeobox family. Class II subfamily. In terms of tissue distribution, expressed in seedlings, roots, stems, leaf sheaths and blades and panicles.

It is found in the nucleus. Probable transcription factor. The chain is Homeobox-leucine zipper protein HOX19 (HOX19) from Oryza sativa subsp. japonica (Rice).